A 514-amino-acid chain; its full sequence is MSQAATPAADGKVKISIDPLTRVEGHLKIEVEVKDGKVVDAKCSGGMFRGFEQILRGRDPRDSSQIVQRICGVCPTAHCTASVMAQDDAFGVKVTTNGRITRNLIFGANYLQSHILHFYHLAALDYVKGPDVSPFVPRYANADLLTDRIKDGAKADATNTYGLNQYLKALEIRRICHEMVAMFGGRMPHVQGMVVGGATEIPTADKVAEYAARFKEVQKFVIEEYLPLIYTLGSVYTDLFETGIGWKNVIAFGVFPEDDDYKTFLLKPGVYIDGKDEEFDSKLVKEYVGHSFFDHSAPGGLHYSVGETNPNPDKPGAYSFVKAPRYKDKPCEVGPLARMWVQNPELSPVGQKLLKELYGIEAKKFRDLGDKAFSIMGRHVLVAEETWLTAVAVEKWLKQVQPGAETYVKSEIPDAAEGTGFTEAPRGALLHYLKIKDKKIENYQIVSATLWNANPRDDMGQRGPIEEALIGVPVPDIKNPVNVGRLVRSYDPULGCAVHVLHAETGEEHVVNID.

Glutamate 52 is a binding site for Fe cation. Cysteine 71 and cysteine 74 together coordinate Ni(2+). Positions 74 and 445 each coordinate Fe cation. Ni(2+) contacts are provided by selenocysteine 493 and cysteine 496. Selenocysteine 493 is a non-standard amino acid (selenocysteine). Fe cation-binding residues include cysteine 496 and histidine 499.

It belongs to the [NiFe]/[NiFeSe] hydrogenase large subunit family. In terms of assembly, heterodimer of a large and a small subunit. It depends on Fe cation as a cofactor. Requires Ni(2+) as cofactor.

It is found in the periplasm. It carries out the reaction H2 + A = AH2. The chain is Periplasmic [NiFeSe] hydrogenase large subunit from Desulfomicrobium baculatum (Desulfovibrio baculatus).